Consider the following 91-residue polypeptide: Small ribosomal subunit protein uS19 (91 aa).

The interval 1 to 32 is disordered; the sequence is MPRSIKKGPFIDEHLDRKVQSAQASNSRRPIK. The span at 9–19 shows a compositional bias: basic and acidic residues; sequence PFIDEHLDRKV.

It belongs to the universal ribosomal protein uS19 family.

Functionally, protein S19 forms a complex with S13 that binds strongly to the 16S ribosomal RNA. In Acidithiobacillus ferrooxidans (strain ATCC 53993 / BNL-5-31) (Leptospirillum ferrooxidans (ATCC 53993)), this protein is Small ribosomal subunit protein uS19.